The chain runs to 337 residues: Pyrophosphate--fructose 6-phosphate 1-phosphotransferase (337 aa).

Gly-10 lines the diphosphate pocket. Asp-101 provides a ligand contact to Mg(2+). Substrate is bound by residues 124–126, Arg-161, 168–170, Glu-220, Arg-257, and 263–266; these read TID, MGR, and HTIR. Asp-126 functions as the Proton acceptor in the catalytic mechanism.

Belongs to the phosphofructokinase type A (PFKA) family. Mixed-substrate PFK group III subfamily. In terms of assembly, homodimer or homotrimer. It depends on Mg(2+) as a cofactor.

It localises to the cytoplasm. The catalysed reaction is beta-D-fructose 6-phosphate + diphosphate = beta-D-fructose 1,6-bisphosphate + phosphate + H(+). Its pathway is carbohydrate degradation; glycolysis; D-glyceraldehyde 3-phosphate and glycerone phosphate from D-glucose: step 3/4. Its activity is regulated as follows. Non-allosteric. Catalyzes the phosphorylation of D-fructose 6-phosphate, the first committing step of glycolysis. Uses inorganic phosphate (PPi) as phosphoryl donor instead of ATP like common ATP-dependent phosphofructokinases (ATP-PFKs), which renders the reaction reversible, and can thus function both in glycolysis and gluconeogenesis. Consistently, PPi-PFK can replace the enzymes of both the forward (ATP-PFK) and reverse (fructose-bisphosphatase (FBPase)) reactions. In Thermoproteus tenax (strain ATCC 35583 / DSM 2078 / JCM 9277 / NBRC 100435 / Kra 1), this protein is Pyrophosphate--fructose 6-phosphate 1-phosphotransferase.